Reading from the N-terminus, the 536-residue chain is Putative cysteine ligase BshC (536 aa).

Belongs to the BshC family.

In terms of biological role, involved in bacillithiol (BSH) biosynthesis. May catalyze the last step of the pathway, the addition of cysteine to glucosamine malate (GlcN-Mal) to generate BSH. The sequence is that of Putative cysteine ligase BshC from Anoxybacillus flavithermus (strain DSM 21510 / WK1).